Reading from the N-terminus, the 367-residue chain is Adenine deaminase (367 aa).

Residues His-19, His-21, and His-209 each coordinate Zn(2+). Glu-212 acts as the Proton donor in catalysis. A Zn(2+)-binding site is contributed by Asp-290. Residue Asp-291 coordinates substrate.

This sequence belongs to the metallo-dependent hydrolases superfamily. Adenosine and AMP deaminases family. Adenine deaminase type 2 subfamily. It depends on Zn(2+) as a cofactor.

Its subcellular location is the cytoplasm. It localises to the nucleus. The catalysed reaction is adenine + H2O + H(+) = hypoxanthine + NH4(+). Catalyzes the hydrolytic deamination of adenine to hypoxanthine. Plays an important role in the purine salvage pathway and in nitrogen catabolism. Also exhibits a low activity towards N(6)-substituted adenines that are commonly known as the plant hormones cytokinins. The chain is Adenine deaminase from Schizosaccharomyces pombe (strain 972 / ATCC 24843) (Fission yeast).